The primary structure comprises 198 residues: GTP cyclohydrolase 1 (198 aa).

Cys87, His90, and Cys158 together coordinate Zn(2+).

This sequence belongs to the GTP cyclohydrolase I family. In terms of assembly, homomer.

It carries out the reaction GTP + H2O = 7,8-dihydroneopterin 3'-triphosphate + formate + H(+). It participates in cofactor biosynthesis; 7,8-dihydroneopterin triphosphate biosynthesis; 7,8-dihydroneopterin triphosphate from GTP: step 1/1. In Janthinobacterium sp. (strain Marseille) (Minibacterium massiliensis), this protein is GTP cyclohydrolase 1.